A 106-amino-acid chain; its full sequence is Large ribosomal subunit protein uL24 (106 aa).

The protein belongs to the universal ribosomal protein uL24 family. As to quaternary structure, part of the 50S ribosomal subunit.

In terms of biological role, one of two assembly initiator proteins, it binds directly to the 5'-end of the 23S rRNA, where it nucleates assembly of the 50S subunit. Functionally, one of the proteins that surrounds the polypeptide exit tunnel on the outside of the subunit. This is Large ribosomal subunit protein uL24 from Acidithiobacillus ferrooxidans (strain ATCC 53993 / BNL-5-31) (Leptospirillum ferrooxidans (ATCC 53993)).